The following is a 182-amino-acid chain: UPF0316 protein lp_1140 (182 aa).

Transmembrane regions (helical) follow at residues 1–21, 36–56, and 62–82; these read MHID…YITL, FAAF…SLVL, and PINL…GMVI.

This sequence belongs to the UPF0316 family.

It localises to the cell membrane. The chain is UPF0316 protein lp_1140 from Lactiplantibacillus plantarum (strain ATCC BAA-793 / NCIMB 8826 / WCFS1) (Lactobacillus plantarum).